The chain runs to 388 residues: (S)-8-oxocitronellyl enol synthase (388 aa).

NADP(+)-binding positions include 38 to 40 (TGI), 66 to 67 (RR), 84 to 85 (DV), 108 to 109 (SW), and glutamine 142. Active-site residues include lysine 146 and tyrosine 178. Substrate contacts are provided by lysine 146 and tyrosine 178. Residues tyrosine 178, valine 204, and 211–213 (SMM) contribute to the NADP(+) site. A substrate-binding site is contributed by serine 349.

This sequence belongs to the short-chain dehydrogenases/reductases (SDR) family. Highly divergent. In terms of assembly, homodimer. Expressed in internal phloem-associated parenchyma (IPAP) cells.

It localises to the cytoplasm. It is found in the cytosol. The enzyme catalyses (S)-8-oxocitronellyl enol + NADP(+) = (6E)-8-oxogeranial + NADPH + H(+). It carries out the reaction (S)-8-oxocitronellyl enol + NAD(+) = (6E)-8-oxogeranial + NADH + H(+). Its function is as follows. Iridoid synthase that catalyzes the first step in generation of the iridoid ring scaffold using the linear monoterpene (6E)-8-oxogeranial as substrate. Iridoids comprise a large family of distinctive bicyclic monoterpenes that possess a wide range of pharmacological activities, including anticancer, anti-inflammatory, antifungal and antibacterial activities. In Catharanthus roseus (Madagascar periwinkle), this protein is (S)-8-oxocitronellyl enol synthase.